The following is a 478-amino-acid chain: Aspartate ammonia-lyase (478 aa).

Residues Thr104, Ser143, Thr144, Asn145, and Thr190 each contribute to the L-aspartate site. The interval 320–329 is SS loop; the sequence is GSSIMPAKVN. Ser321 acts as the Proton acceptor in catalysis. The L-aspartate site is built by Ser322 and Lys327.

It belongs to the class-II fumarase/aspartase family. Aspartase subfamily. Homotetramer.

It carries out the reaction L-aspartate = fumarate + NH4(+). Its function is as follows. Catalyzes the reversible conversion of L-aspartate to fumarate and ammonia. The polypeptide is Aspartate ammonia-lyase (aspA) (Escherichia coli O157:H7).